Consider the following 692-residue polypeptide: Pentatricopeptide repeat-containing protein At2g04860 (692 aa).

PPR repeat units follow at residues Asp-12–Pro-46, Asn-47–Arg-83, Phe-84–Arg-114, Asp-115–Pro-149, Ser-150–Leu-184, Asp-185–Lys-215, Ser-216–Ile-250, Asp-280–Gly-314, Thr-316–Ile-345, Asp-346–Thr-380, Lys-381–Thr-411, Pro-412–Pro-447, Asp-448–Asn-482, Glu-483–Pro-513, Cys-514–Pro-548, Asp-549–Pro-584, and Thr-585–Lys-615. The interval Val-620–Ile-692 is type E motif; degenerate.

It belongs to the PPR family. PCMP-E subfamily.

This Arabidopsis thaliana (Mouse-ear cress) protein is Pentatricopeptide repeat-containing protein At2g04860 (PCMP-E74).